Reading from the N-terminus, the 252-residue chain is Hydrolase phiM (252 aa).

The active-site Charge relay system is serine 126.

Belongs to the LovG family.

It participates in secondary metabolite biosynthesis. In terms of biological role, hydrolase; part of the gene cluster that mediates the biosynthesis of the antihypercholesterolemic agents phomoidrides which are dimeric anhydrides. Within the pathway, phiM releases the C12-fatty acyl chain from phiA. The pathway begins with the highly reducing polyketide synthase tstA that catalyzes the formation of a C12-fatty acyl-ACP, starting from one acetate and 5 malonate units. The hydrolase tstM is involved in the release of the C12-fatty acyl chain from phiA. The alkylcitrate synthase (ACS) tstJ and the alkylcitrate dehydratase (ACDH) tstI then give rise to decarboxylated monomeric anhydrides by coupling the C12-fatty acyl chain with oxalacetic acid. The cyclase tstC is responsible for the dimerization of the monomeric anhydrides which leads to the production of prephomoidride that contains the characteristic bicyclo[4.3.1]deca-1,6-diene system of phomoidrides. Iterative oxidation catalyzed by the alpha-ketoglutarate-dependent dioxygenase tstK produced then phomoidride A. Finally, the methyltransferase tstE converts phomoidride A to phomoidride B via an acetalization reaction. The phosphatidylethanolamine-binding protein tstB and tstN are not essential for dimerization and their functions have still to be determined. In Talaromyces stipitatus (strain ATCC 10500 / CBS 375.48 / QM 6759 / NRRL 1006) (Penicillium stipitatum), this protein is Hydrolase phiM.